Here is a 90-residue protein sequence, read N- to C-terminus: Progonadoliberin-3 (90 aa).

The first 23 residues, 1–23 (MEASSRVTVQVLLLALVVQVTLS), serve as a signal peptide directing secretion. Glutamine 24 is modified (pyrrolidone carboxylic acid). Glycine 33 bears the Glycine amide mark.

It belongs to the GnRH family.

It is found in the secreted. In terms of biological role, stimulates the secretion of gonadotropins. The polypeptide is Progonadoliberin-3 (gnrh3) (Sparus aurata (Gilthead sea bream)).